We begin with the raw amino-acid sequence, 198 residues long: Ras-like protein 2 (198 aa).

18 to 25 (GDGGVGKS) contributes to the GTP binding site. An Effector region motif is present at residues 40 to 48 (YDPTIEDSY). GTP is bound by residues 65-69 (DTAGQ) and 124-127 (NKCD). At Cys-195 the chain carries Cysteine methyl ester. A lipid anchor (S-farnesyl cysteine) is attached at Cys-195. Positions 196 to 198 (IVM) are cleaved as a propeptide — removed in mature form.

It belongs to the small GTPase superfamily. Ras family.

Its subcellular location is the cell membrane. It catalyses the reaction GTP + H2O = GDP + phosphate + H(+). With respect to regulation, alternates between an inactive form bound to GDP and an active form bound to GTP. Activated by a guanine nucleotide-exchange factor (GEF) and inactivated by a GTPase-activating protein (GAP). The protein is Ras-like protein 2 (RAS2) of Mucor circinelloides f. lusitanicus (Mucor racemosus var. lusitanicus).